The chain runs to 693 residues: Elongation factor G (693 aa).

The 275-residue stretch at 9-283 (ERVRNIGIIA…AVCDYLPSPV (275 aa)) folds into the tr-type G domain. GTP contacts are provided by residues 18-25 (AHIDAGKT), 82-86 (DTPGH), and 136-139 (NKMD).

The protein belongs to the TRAFAC class translation factor GTPase superfamily. Classic translation factor GTPase family. EF-G/EF-2 subfamily.

The protein resides in the cytoplasm. In terms of biological role, catalyzes the GTP-dependent ribosomal translocation step during translation elongation. During this step, the ribosome changes from the pre-translocational (PRE) to the post-translocational (POST) state as the newly formed A-site-bound peptidyl-tRNA and P-site-bound deacylated tRNA move to the P and E sites, respectively. Catalyzes the coordinated movement of the two tRNA molecules, the mRNA and conformational changes in the ribosome. This is Elongation factor G from Dehalococcoides mccartyi (strain ATCC BAA-2266 / KCTC 15142 / 195) (Dehalococcoides ethenogenes (strain 195)).